A 107-amino-acid chain; its full sequence is Integration host factor subunit beta (107 aa).

A disordered region spans residues 54 to 107 (NRRPARVGRNPKSGEKVQVPEKHVPHFKPGKELRERVDGRAGEPLKNDEPEDGQ). Over residues 65 to 101 (KSGEKVQVPEKHVPHFKPGKELRERVDGRAGEPLKND) the composition is skewed to basic and acidic residues.

It belongs to the bacterial histone-like protein family. In terms of assembly, heterodimer of an alpha and a beta chain.

Its function is as follows. This protein is one of the two subunits of integration host factor, a specific DNA-binding protein that functions in genetic recombination as well as in transcriptional and translational control. This chain is Integration host factor subunit beta, found in Burkholderia thailandensis (strain ATCC 700388 / DSM 13276 / CCUG 48851 / CIP 106301 / E264).